The primary structure comprises 199 residues: MQYPLPIARLIDSFMKLPGIGEKTATRLAFYAMDMPKEDVDEFAQALVDVKEKLRQCSVCGNITEQDPCAICSNPVRDRSTIMVVEEAKDVMAFENMGEYDGLYHVLHGVLSPMDGIGPEQINIKSLIVRLQKNDAAKEVILALNSTPEGESTAMYISRLIKPAGLKVTRLAAGLAVGSDIEYANLITLKRAVQGRTEL.

A C4-type zinc finger spans residues 57-72 (CSVCGNITEQDPCAIC). One can recognise a Toprim domain in the interval 80–176 (STIMVVEEAK…KVTRLAAGLA (97 aa)).

Belongs to the RecR family.

Its function is as follows. May play a role in DNA repair. It seems to be involved in an RecBC-independent recombinational process of DNA repair. It may act with RecF and RecO. In Lactobacillus delbrueckii subsp. bulgaricus (strain ATCC BAA-365 / Lb-18), this protein is Recombination protein RecR.